Consider the following 253-residue polypeptide: Phycoerythrobilin:ferredoxin oxidoreductase (253 aa).

This sequence belongs to the HY2 family.

It catalyses the reaction (3Z)-phycoerythrobilin + oxidized 2[4Fe-4S]-[ferredoxin] = 15,16-dihydrobiliverdin + reduced 2[4Fe-4S]-[ferredoxin] + 2 H(+). Functionally, catalyzes the two-electron reduction of the C2 and C3(1) diene system of 15,16-dihydrobiliverdin. The chain is Phycoerythrobilin:ferredoxin oxidoreductase from Prochlorococcus marinus (strain MIT 9301).